The following is a 367-amino-acid chain: Uroporphyrinogen decarboxylase (367 aa).

Methionine 1 carries the post-translational modification N-acetylmethionine. Residues arginine 37, alanine 39, arginine 41, arginine 50, aspartate 86, tyrosine 164, serine 219, and histidine 339 each coordinate coproporphyrinogen I. Residues arginine 37, alanine 39, and arginine 41 each contribute to the coproporphyrinogen III site. The coproporphyrinogen III site is built by aspartate 86, tyrosine 164, serine 219, and histidine 339.

The protein belongs to the uroporphyrinogen decarboxylase family. As to quaternary structure, homodimer.

The protein resides in the cytoplasm. Its subcellular location is the cytosol. It carries out the reaction uroporphyrinogen III + 4 H(+) = coproporphyrinogen III + 4 CO2. It catalyses the reaction uroporphyrinogen I + 4 H(+) = coproporphyrinogen I + 4 CO2. The protein operates within porphyrin-containing compound metabolism; protoporphyrin-IX biosynthesis; coproporphyrinogen-III from 5-aminolevulinate: step 4/4. In terms of biological role, catalyzes the sequential decarboxylation of the four acetate side chains of uroporphyrinogen to form coproporphyrinogen and participates in the fifth step in the heme biosynthetic pathway. Isomer I or isomer III of uroporphyrinogen may serve as substrate, but only coproporphyrinogen III can ultimately be converted to heme. In vitro also decarboxylates pentacarboxylate porphyrinogen I. The chain is Uroporphyrinogen decarboxylase from Ovis aries (Sheep).